Consider the following 146-residue polypeptide: Inclusion membrane protein D (146 aa).

Transmembrane regions (helical) follow at residues 38-58 (AAVA…GLLF) and 68-88 (VVAA…ALVG).

The protein resides in the secreted. The protein localises to the host vacuole. It is found in the host pathogen-containing vacuole. Its subcellular location is the host pathogen-containing vacuole membrane. Its function is as follows. Host inclusion membrane protein probably involved in early modification events of the chlamydial inclusion. The polypeptide is Inclusion membrane protein D (Chlamydia trachomatis serovar L2 (strain ATCC VR-902B / DSM 19102 / 434/Bu)).